Reading from the N-terminus, the 185-residue chain is MKTAQELRVGNVVQIGSDAWVIAKTEYNKSGRNAAVVKMKMKNLLTNAGQEAVYKADDKFDVVVLDRKEVTYSYFADPMYVFMDADYNQYEVEAEMMGEALNYLEDGMACEVVFYNEKAISVELPTILVREITYTEPAVKGDTSSGKVLKNAKLATGFELQVPLFCNTGDKIEIDTRTNEYRSRA.

Belongs to the elongation factor P family.

It is found in the cytoplasm. It functions in the pathway protein biosynthesis; polypeptide chain elongation. Involved in peptide bond synthesis. Stimulates efficient translation and peptide-bond synthesis on native or reconstituted 70S ribosomes in vitro. Probably functions indirectly by altering the affinity of the ribosome for aminoacyl-tRNA, thus increasing their reactivity as acceptors for peptidyl transferase. This chain is Elongation factor P, found in Burkholderia vietnamiensis (strain G4 / LMG 22486) (Burkholderia cepacia (strain R1808)).